Consider the following 105-residue polypeptide: Large ribosomal subunit protein bL21 (105 aa).

The protein belongs to the bacterial ribosomal protein bL21 family. In terms of assembly, part of the 50S ribosomal subunit. Contacts protein L20.

In terms of biological role, this protein binds to 23S rRNA in the presence of protein L20. The chain is Large ribosomal subunit protein bL21 from Bacteroides fragilis (strain YCH46).